The primary structure comprises 462 residues: Argininosuccinate lyase (462 aa).

The protein belongs to the lyase 1 family. Argininosuccinate lyase subfamily.

The protein localises to the cytoplasm. The enzyme catalyses 2-(N(omega)-L-arginino)succinate = fumarate + L-arginine. It participates in amino-acid biosynthesis; L-arginine biosynthesis; L-arginine from L-ornithine and carbamoyl phosphate: step 3/3. This Pelagibacter ubique (strain HTCC1062) protein is Argininosuccinate lyase.